We begin with the raw amino-acid sequence, 1630 residues long: Merozoite surface protein 1 (1630 aa).

An N-terminal signal peptide occupies residues 1–19 (MKIIFFLCSFLFFIINTQC). The segment at 60 to 113 (TKGASAQSGTSGTSGTSGPSGPSGTSPSSRSNTLPRSNTSSGASPPADASDSDA) is disordered. Residues 67–84 (SGTSGTSGTSGPSGPSGT) are tripeptide SG(TP) repeat. A compositionally biased stretch (low complexity) spans 67–88 (SGTSGTSGTSGPSGPSGTSPSS). A compositionally biased stretch (polar residues) spans 89-98 (RSNTLPRSNT). Residue asparagine 97 is glycosylated (N-linked (GlcNAc...) asparagine). Residues 99-108 (SSGASPPADA) are compositionally biased toward low complexity. The N-linked (GlcNAc...) asparagine glycan is linked to asparagine 259. The disordered stretch occupies residues 680-755 (KKNIKTEGQS…VPTPPAPVNN (76 aa)). Polar residues-rich tracts occupy residues 685–695 (TEGQSDNSEPS) and 702–713 (GQATTKPGQQAG). Positions 721–732 (VQAQAQEQKQAQ) are enriched in low complexity. 4 N-linked (GlcNAc...) asparagine glycosylation sites follow: asparagine 755, asparagine 759, asparagine 774, and asparagine 835. A disordered region spans residues 884–906 (SMQPLSLTPQDKPEVSANDDTSH). 5 N-linked (GlcNAc...) asparagine glycosylation sites follow: asparagine 911, asparagine 955, asparagine 1049, asparagine 1156, and asparagine 1165. The tract at residues 993–1107 (QLSFDLYNKY…EESIQTEDNY (115 aa)) is required for binding to host erythrocyte cell membrane. A compositionally biased stretch (polar residues) spans 1190–1203 (VSESGSDTLEQSQP). The disordered stretch occupies residues 1190–1220 (VSESGSDTLEQSQPKKPASTHVGAESNTITT). N-linked (GlcNAc...) asparagine glycans are attached at residues asparagine 1436 and asparagine 1517. EGF-like domains are found at residues 1521 to 1561 (HQCV…VENP) and 1562 to 1610 (NPTC…FCSS). 6 cysteine pairs are disulfide-bonded: cysteine 1523/cysteine 1534, cysteine 1528/cysteine 1544, cysteine 1546/cysteine 1557, cysteine 1565/cysteine 1578, cysteine 1572/cysteine 1592, and cysteine 1594/cysteine 1608. Serine 1609 carries the GPI-anchor amidated serine lipid modification. Positions 1610-1630 (SSNFLGISFLLILMLILYSFI) are cleaved as a propeptide — removed in mature form.

Forms a complex composed of subunits p83, p30, p38, and p42 which remain non-covalently associated; the complex is formed at the merozoite surface prior to egress from host erythrocytes. Forms a complex composed of processed MSP1 subunits, MSP6 subunit p36 and MSP7; the complex is formed at the merozoite surface prior to egress from host erythrocytes. Within the complex, interacts (via subunit p38) with MSP6 subunit p36 and (via subunits p83, p30 and p38) with MSP7 (via subunit p22). Forms a complex composed of MSP1, MSP6, DBLMSP1 and DBLMSP2. Within the complex, interacts (via subunit p38) with DBLMSP1 and DBLMSP2. Forms a complex composed of MSP1, and rhoptry proteins RhopH3, RAP1 and CLAG9/RhopH3. Within the complex, interacts (via subunits p42 and p19) with RhopH3 (via C-terminus). Forms a complex composed of MSP1, MSP6, MSP7, MSP9 and MSP3; within the complex, MSP6 and MSP9 mediate the binding to the host erythrocyte. Interacts (via subunits p19 and p42) with MSP9; the interaction is direct; MSP1 subunits p19 or p42, and MSP9 form a co-ligand complex that interacts with host SLC4A1/Band 3 protein. May interact with PFD6. Interacts with host spectrin. In terms of assembly, interacts with host glycophorin GYPA in a sialic acid-independent manner. As to quaternary structure, interacts with host proinflammatory cytokine S100P; the interaction blocks S100P inflammatory and chemotactic activities. Interacts with host SLC4A1/Band 3 (via 5ABC region) on the host erythrocyte surface in a sialic acid-independent manner. In terms of processing, the p190 precursor is cleaved by SUB1 prior to merozoite egress into 4 subunits p83, p30, p38, and p42 which remain non-covalently associated. SUB1-mediated proteolytic cleavage occurs in an orderly manner; the first cleavage occurs at the p83/p30 site, followed by cleavage at the p30/p38 site, the last cleavage occurs at the p38/p42 site. The order of cleavage is essential for parasite viability. SUB1-mediated processing is essential for merozoite egress. In a second processing step during erythrocyte invasion, p42 is cleaved by SUB2 into p33 and p19; the latter remains attached to the merozoite surface via its GPI-anchor and stays on the surface during the subsequent ring stage.

Its subcellular location is the cell membrane. The protein localises to the secreted. It localises to the vacuole membrane. Its function is as follows. During the asexual blood stage, involved in merozoite egress from host erythrocytes possibly via its interaction with the host cytoskeleton protein spectrin resulting in the destabilization of the host cytoskeleton and thus leading to erythrocyte cell membrane rupture. Involved in the binding to host erythrocytes and is required for host erythrocyte invasion. In terms of biological role, by binding to host proinflammatory cytokine S100P may interfere with host immune responses. Functionally, involved in merozoite invasion of host erythrocytes. May play a role in the biogenesis and/or function of the food vacuole during the intraerythrocytic development. In Plasmodium falciparum (isolate K1 / Thailand), this protein is Merozoite surface protein 1.